Here is a 411-residue protein sequence, read N- to C-terminus: Arginine deiminase 1 (411 aa).

Catalysis depends on cysteine 401, which acts as the Amidino-cysteine intermediate.

The protein belongs to the arginine deiminase family.

It localises to the cytoplasm. The enzyme catalyses L-arginine + H2O = L-citrulline + NH4(+). It functions in the pathway amino-acid degradation; L-arginine degradation via ADI pathway; carbamoyl phosphate from L-arginine: step 1/2. This Staphylococcus epidermidis (strain ATCC 12228 / FDA PCI 1200) protein is Arginine deiminase 1 (arcA1).